Consider the following 312-residue polypeptide: Homoserine O-succinyltransferase (312 aa).

Cysteine 142 (acyl-thioester intermediate) is an active-site residue. 2 residues coordinate substrate: lysine 163 and serine 192. Residue histidine 235 is the Proton acceptor of the active site. Residue glutamate 237 is part of the active site. Arginine 249 lines the substrate pocket.

Belongs to the MetA family.

It is found in the cytoplasm. The catalysed reaction is L-homoserine + succinyl-CoA = O-succinyl-L-homoserine + CoA. It functions in the pathway amino-acid biosynthesis; L-methionine biosynthesis via de novo pathway; O-succinyl-L-homoserine from L-homoserine: step 1/1. Functionally, transfers a succinyl group from succinyl-CoA to L-homoserine, forming succinyl-L-homoserine. The protein is Homoserine O-succinyltransferase of Shewanella halifaxensis (strain HAW-EB4).